The primary structure comprises 300 residues: Cation-efflux pump FieF (300 aa).

A helical transmembrane segment spans residues 24–44 (LLIKILAWWYTGSVSILAALV). 2 residues coordinate Zn(2+): aspartate 45 and aspartate 49. 2 consecutive transmembrane segments (helical) span residues 82 to 102 (AALA…LTSI) and 114 to 134 (PGVG…LVTF). 2 residues coordinate Zn(2+): histidine 153 and aspartate 157. The next 2 helical transmembrane spans lie at 156 to 176 (SDVM…YGWH) and 178 to 198 (ADAL…LRMG).

Belongs to the cation diffusion facilitator (CDF) transporter (TC 2.A.4) family. FieF subfamily. Homodimer.

Its subcellular location is the cell inner membrane. The catalysed reaction is Zn(2+)(in) + H(+)(out) = Zn(2+)(out) + H(+)(in). The enzyme catalyses Cd(2+)(in) + H(+)(out) = Cd(2+)(out) + H(+)(in). It catalyses the reaction Fe(2+)(in) + H(+)(out) = Fe(2+)(out) + H(+)(in). Divalent metal cation transporter which exports Zn(2+), Cd(2+) and possibly Fe(2+). May be involved in zinc and iron detoxification by efflux. This chain is Cation-efflux pump FieF, found in Salmonella agona (strain SL483).